A 452-amino-acid polypeptide reads, in one-letter code: UDP-glycosyltransferase 76E4 (452 aa).

UDP-alpha-D-glucose contacts are provided by residues Thr-274, 333-335 (APQ), 350-358 (HCGWNSTLE), and 372-375 (QGEQ).

This sequence belongs to the UDP-glycosyltransferase family.

The protein is UDP-glycosyltransferase 76E4 (UGT76E4) of Arabidopsis thaliana (Mouse-ear cress).